The primary structure comprises 476 residues: Argininosuccinate lyase (476 aa).

The protein belongs to the lyase 1 family. Argininosuccinate lyase subfamily.

The protein resides in the cytoplasm. It carries out the reaction 2-(N(omega)-L-arginino)succinate = fumarate + L-arginine. The protein operates within amino-acid biosynthesis; L-arginine biosynthesis; L-arginine from L-ornithine and carbamoyl phosphate: step 3/3. The sequence is that of Argininosuccinate lyase from Acaryochloris marina (strain MBIC 11017).